The sequence spans 437 residues: tRNA-queuosine alpha-mannosyltransferase (437 aa).

This sequence belongs to the glycosyltransferase group 1 family. Glycosyltransferase 4 subfamily.

The protein localises to the cytoplasm. The protein resides in the nucleus. The catalysed reaction is queuosine(34) in tRNA(Asp) + GDP-alpha-D-mannose = O-4''-alpha-D-mannosylqueuosine(34) in tRNA(Asp) + GDP + H(+). Its function is as follows. Glycosyltransferase that specifically catalyzes mannosylation of cytoplasmic tRNA(Asp) modified with queuosine at position 34 (queuosine(34)). Mannosylates the cyclopentene moiety of queuosine(34) in tRNA(Asp) to form mannosyl-queuosine(34). Mannosylation of queuosine(34) in tRNA(Asp) is required to slow-down elongation at cognate codons, GAC and GAU, thereby regulating protein translation. This is tRNA-queuosine alpha-mannosyltransferase (gtdc1) from Xenopus laevis (African clawed frog).